A 337-amino-acid polypeptide reads, in one-letter code: Metacaspase III c (337 aa).

Propeptides lie at residues 1-6 (MGFLRR) and 116-125 (VPPAATGTRR). A Cysteine sulfenic acid (-SOH) modification is found at Cys-202. The cysteines at positions 202 and 259 are disulfide-linked. The active site involves His-207. Ca(2+)-binding residues include Asp-224, Asp-240, and Asp-241. Cys-264 is an active-site residue. Asp-271 provides a ligand contact to Ca(2+). The propeptide occupies 290 to 337 (NFDFKKLLGKFGIDDFDKFGGEALGKINGDALGKVGKDALGKLNKFFG).

The protein belongs to the peptidase C14B family. Post-translationally, auto-proteolytic cleavage into a large and a small subunit which probably remain associated by non-covalent bonds. In terms of processing, following oxidative stress, the oxidation of Cys-202 leads to the formation of a disulfide bond between Cys-202 and Cys-259 which enhances catalytic activity.

Its activity is regulated as follows. Activated by Ca(2+). Cysteine protease that cleaves specifically after arginine residues. The protein is Metacaspase III c of Phaeodactylum tricornutum (strain CCAP 1055/1).